We begin with the raw amino-acid sequence, 142 residues long: MNSFALLLVCIQACLVQSVFSQCTSRAAVAADRGIIGGYGLGAPCSLGYGLEAPYGWAGYADFGYPAGAYGIDAYGGIGEGNVAVAGELPVAGTTAVAGQVPIMGAVKFGGDVCAAGSVSIAGKCACGCGEYGYGLGAPYLY.

Residues 1–18 (MNSFALLLVCIQACLVQS) form the signal peptide.

This sequence belongs to the chorion protein family.

This protein is one of many from the eggshell of the gypsy moth. The protein is Chorion class A protein Ld19 of Lymantria dispar (Gypsy moth).